The following is a 246-amino-acid chain: 3-deoxy-manno-octulosonate cytidylyltransferase (246 aa).

It belongs to the KdsB family.

The protein localises to the cytoplasm. The catalysed reaction is 3-deoxy-alpha-D-manno-oct-2-ulosonate + CTP = CMP-3-deoxy-beta-D-manno-octulosonate + diphosphate. It functions in the pathway nucleotide-sugar biosynthesis; CMP-3-deoxy-D-manno-octulosonate biosynthesis; CMP-3-deoxy-D-manno-octulosonate from 3-deoxy-D-manno-octulosonate and CTP: step 1/1. It participates in bacterial outer membrane biogenesis; lipopolysaccharide biosynthesis. In terms of biological role, activates KDO (a required 8-carbon sugar) for incorporation into bacterial lipopolysaccharide in Gram-negative bacteria. This chain is 3-deoxy-manno-octulosonate cytidylyltransferase, found in Leptospira borgpetersenii serovar Hardjo-bovis (strain JB197).